The chain runs to 351 residues: sn-glycerol-3-phosphate import ATP-binding protein UgpC (351 aa).

An ABC transporter domain is found at 4–234 (ITLDNLVKAY…PATTFVAGFI (231 aa)). 36–43 (GPSGCGKS) contributes to the ATP binding site.

Belongs to the ABC transporter superfamily. sn-glycerol-3-phosphate importer (TC 3.A.1.1.3) family. In terms of assembly, the complex is composed of two ATP-binding proteins (UgpC), two transmembrane proteins (UgpA and UgpE) and a solute-binding protein (UgpB).

It is found in the cell inner membrane. It carries out the reaction sn-glycerol 3-phosphate(out) + ATP + H2O = sn-glycerol 3-phosphate(in) + ADP + phosphate + H(+). In terms of biological role, part of the ABC transporter complex UgpBAEC involved in sn-glycerol-3-phosphate (G3P) import. Responsible for energy coupling to the transport system. The sequence is that of sn-glycerol-3-phosphate import ATP-binding protein UgpC from Ruegeria pomeroyi (strain ATCC 700808 / DSM 15171 / DSS-3) (Silicibacter pomeroyi).